Here is a 278-residue protein sequence, read N- to C-terminus: HTH-type transcriptional activator RhaS (278 aa).

Positions 174 to 272 constitute an HTH araC/xylS-type domain; sequence NLLLAWLEDH…NWSPRDIRQG (99 aa). 2 DNA-binding regions (H-T-H motif) span residues 191 to 212 and 239 to 262; these read DAVA…KQQT and VTDI…RREF.

As to quaternary structure, binds DNA as a dimer.

It localises to the cytoplasm. Activates expression of the rhaBAD and rhaT operons. In Shigella sonnei (strain Ss046), this protein is HTH-type transcriptional activator RhaS.